Reading from the N-terminus, the 312-residue chain is Ribosomal RNA small subunit methyltransferase H (312 aa).

Residues 35 to 37 (GGH), aspartate 55, aspartate 101, and glutamine 108 each bind S-adenosyl-L-methionine. Residues 285–306 (ALKPSEHEVTENSRSRSSVLRV) are disordered. A compositionally biased stretch (basic and acidic residues) spans 287-298 (KPSEHEVTENSR).

Belongs to the methyltransferase superfamily. RsmH family.

The protein localises to the cytoplasm. It catalyses the reaction cytidine(1402) in 16S rRNA + S-adenosyl-L-methionine = N(4)-methylcytidine(1402) in 16S rRNA + S-adenosyl-L-homocysteine + H(+). Its function is as follows. Specifically methylates the N4 position of cytidine in position 1402 (C1402) of 16S rRNA. The protein is Ribosomal RNA small subunit methyltransferase H of Aeromonas salmonicida (strain A449).